Here is a 1230-residue protein sequence, read N- to C-terminus: Formin-like protein 14 (1230 aa).

The Phosphatase tensin-type domain occupies 1–194; it reads MSLLSRFFYK…QYVARRNINS (194 aa). The Phosphocysteine intermediate role is filled by cysteine 127. One can recognise a C2 tensin-type domain in the interval 200-339; the sequence is ERALSLDCVI…FRAEVLFGEV (140 aa). Disordered stretches follow at residues 412–432, 460–822, and 1187–1230; these read FNSP…SSDE, HESS…LKPL, and ENEK…RHRT. A compositionally biased stretch (low complexity) spans 484–496; the sequence is DNPLNLPSDPPSS. Pro residues-rich tracts occupy residues 503 to 514, 524 to 535, 545 to 556, and 566 to 575; these read LPPPPPPPPPPL, SQPPPPPPPPPL, and SQPPPPPPLP. Positions 579-591 are enriched in polar residues; sequence NRDPLTTLHQPIN. Composition is skewed to pro residues over residues 592 to 630, 637 to 649, 660 to 672, 679 to 688, 699 to 711, 718 to 728, and 735 to 766; these read KTPP…PPPS, PSAP…PPPS, QPPP…PPTR, APPPPPPPPT, PSTP…PPPK, PKPPAPPPLPP, and APPP…PPPG. Positions 809-1207 constitute an FH2 domain; that stretch reads VPTAAPKKTA…KLEKEAIKEK (399 aa). Residues 1187–1215 are compositionally biased toward basic and acidic residues; sequence ENEKQAEAEKKKLEKEAIKEKSATKKDGV.

This sequence belongs to the formin-like family. Class-II subfamily.

The polypeptide is Formin-like protein 14 (FH14) (Arabidopsis thaliana (Mouse-ear cress)).